Consider the following 88-residue polypeptide: U2-ctenitoxin-Pn1a (88 aa).

The first 17 residues, 1-17 (MKVAILILSILVLAVAS), serve as a signal peptide directing secretion. A propeptide spanning residues 18–34 (ETIEEYRDDFAVEELER) is cleaved from the precursor. 5 disulfides stabilise this stretch: C37-C51, C44-C57, C48-C86, C50-C71, and C59-C69. Residue K88 is a propeptide.

Expressed by the venom gland.

The protein resides in the secreted. Its function is as follows. Inhibits voltage-gated sodium channels (Nav). Causes scratching, lacrimation, hypersalivation, sweating and agitation followed by spastic paralysis of the anterior and posterior extremities and death at dose levels of 1.62 mg/mouse. Insecticidal to the larval and adult forms of the house fly. This chain is U2-ctenitoxin-Pn1a, found in Phoneutria nigriventer (Brazilian armed spider).